Reading from the N-terminus, the 255-residue chain is Myb-related protein Zm38 (255 aa).

HTH myb-type domains are found at residues 9–61 (KAHT…INYL) and 62–116 (RPDL…RRKL). 2 DNA-binding regions (H-T-H motif) span residues 37-61 (WRSLPKAAGLLRCGKSCRLRWINYL) and 89-112 (WSLIAARLPGRTDNEIKNYWNTHV).

It is found in the nucleus. Functionally, transcription factor that negatively regulates genes involved in anthocyanin biosynthesis. This chain is Myb-related protein Zm38, found in Zea mays (Maize).